A 212-amino-acid polypeptide reads, in one-letter code: Thiamine-phosphate synthase (212 aa).

4-amino-2-methyl-5-(diphosphooxymethyl)pyrimidine-binding positions include 40 to 44 and Asn75; that span reads QFREK. Mg(2+) is bound by residues Asp76 and Asp95. Ser113 contributes to the 4-amino-2-methyl-5-(diphosphooxymethyl)pyrimidine binding site. 139 to 141 serves as a coordination point for 2-[(2R,5Z)-2-carboxy-4-methylthiazol-5(2H)-ylidene]ethyl phosphate; sequence TIS. A 4-amino-2-methyl-5-(diphosphooxymethyl)pyrimidine-binding site is contributed by Lys142. 2-[(2R,5Z)-2-carboxy-4-methylthiazol-5(2H)-ylidene]ethyl phosphate is bound by residues Gly171 and 191-192; that span reads IS.

Belongs to the thiamine-phosphate synthase family. Requires Mg(2+) as cofactor.

The catalysed reaction is 2-[(2R,5Z)-2-carboxy-4-methylthiazol-5(2H)-ylidene]ethyl phosphate + 4-amino-2-methyl-5-(diphosphooxymethyl)pyrimidine + 2 H(+) = thiamine phosphate + CO2 + diphosphate. The enzyme catalyses 2-(2-carboxy-4-methylthiazol-5-yl)ethyl phosphate + 4-amino-2-methyl-5-(diphosphooxymethyl)pyrimidine + 2 H(+) = thiamine phosphate + CO2 + diphosphate. It carries out the reaction 4-methyl-5-(2-phosphooxyethyl)-thiazole + 4-amino-2-methyl-5-(diphosphooxymethyl)pyrimidine + H(+) = thiamine phosphate + diphosphate. Its pathway is cofactor biosynthesis; thiamine diphosphate biosynthesis; thiamine phosphate from 4-amino-2-methyl-5-diphosphomethylpyrimidine and 4-methyl-5-(2-phosphoethyl)-thiazole: step 1/1. In terms of biological role, condenses 4-methyl-5-(beta-hydroxyethyl)thiazole monophosphate (THZ-P) and 2-methyl-4-amino-5-hydroxymethyl pyrimidine pyrophosphate (HMP-PP) to form thiamine monophosphate (TMP). The protein is Thiamine-phosphate synthase of Staphylococcus haemolyticus (strain JCSC1435).